We begin with the raw amino-acid sequence, 45 residues long: Large ribosomal subunit protein bL34 (45 aa).

The disordered stretch occupies residues 26–45 (RAGRSILSARRSKGRSQLSA).

It belongs to the bacterial ribosomal protein bL34 family.

This is Large ribosomal subunit protein bL34 from Parafrankia sp. (strain EAN1pec).